The following is a 559-amino-acid chain: CTP synthase (559 aa).

The amidoligase domain stretch occupies residues 1–270 (MTKFVFVTGG…DGLICDKLRL (270 aa)). Residue Ser-13 participates in CTP binding. Ser-13 contacts UTP. Residues 14-19 (SLGKGI) and Asp-71 contribute to the ATP site. 2 residues coordinate Mg(2+): Asp-71 and Glu-144. Residues 151–153 (DIE), 191–196 (KTKPTQ), and Lys-227 contribute to the CTP site. UTP is bound by residues 191-196 (KTKPTQ) and Lys-227. Residues 295–548 (TIAMVGKYVD…IKAAIDHQKS (254 aa)) form the Glutamine amidotransferase type-1 domain. Gly-357 contacts L-glutamine. Catalysis depends on Cys-384, which acts as the Nucleophile; for glutamine hydrolysis. L-glutamine-binding positions include 385-388 (LGMQ), Glu-408, and Arg-474. Residues His-521 and Glu-523 contribute to the active site.

The protein belongs to the CTP synthase family. In terms of assembly, homotetramer.

The catalysed reaction is UTP + L-glutamine + ATP + H2O = CTP + L-glutamate + ADP + phosphate + 2 H(+). It catalyses the reaction L-glutamine + H2O = L-glutamate + NH4(+). The enzyme catalyses UTP + NH4(+) + ATP = CTP + ADP + phosphate + 2 H(+). It functions in the pathway pyrimidine metabolism; CTP biosynthesis via de novo pathway; CTP from UDP: step 2/2. With respect to regulation, allosterically activated by GTP, when glutamine is the substrate; GTP has no effect on the reaction when ammonia is the substrate. The allosteric effector GTP functions by stabilizing the protein conformation that binds the tetrahedral intermediate(s) formed during glutamine hydrolysis. Inhibited by the product CTP, via allosteric rather than competitive inhibition. Its function is as follows. Catalyzes the ATP-dependent amination of UTP to CTP with either L-glutamine or ammonia as the source of nitrogen. Regulates intracellular CTP levels through interactions with the four ribonucleotide triphosphates. The chain is CTP synthase from Paracidovorax citrulli (strain AAC00-1) (Acidovorax citrulli).